The chain runs to 306 residues: D-alanine--D-alanine ligase (306 aa).

An ATP-grasp domain is found at 102-300 (KHVAKAAGIP…FGEFLRWMVE (199 aa)). Residue 128-183 (PMKPPYVVKPVREGSSFGVVIVKEDQSHPPQVITSSEWRYGDRVMVERYIAGRELT) participates in ATP binding. Positions 252, 267, and 269 each coordinate Mg(2+).

This sequence belongs to the D-alanine--D-alanine ligase family. It depends on Mg(2+) as a cofactor. Mn(2+) serves as cofactor.

The protein localises to the cytoplasm. The enzyme catalyses 2 D-alanine + ATP = D-alanyl-D-alanine + ADP + phosphate + H(+). The protein operates within cell wall biogenesis; peptidoglycan biosynthesis. In terms of biological role, cell wall formation. The sequence is that of D-alanine--D-alanine ligase from Sinorhizobium fredii (strain NBRC 101917 / NGR234).